The primary structure comprises 100 residues: UPF0125 protein HD_1828 (100 aa).

This sequence belongs to the UPF0125 (RnfH) family.

The polypeptide is UPF0125 protein HD_1828 (Haemophilus ducreyi (strain 35000HP / ATCC 700724)).